The chain runs to 723 residues: Polyribonucleotide nucleotidyltransferase (723 aa).

Mg(2+) contacts are provided by D488 and D494. The KH domain occupies 555-614; it reads PRMITMKIHPDKIREVIGKGGSTIQALTKETGTTIDIQEDGTITIASTSTEGMAEAKRRI. The S1 motif domain occupies 624 to 692; it reads GKIYAGTVLK…EKGRLRLSLK (69 aa). Residues 701–723 are disordered; it reads SISPINAGESAAPAAPAGGSEQQ. Low complexity predominate over residues 707–723; the sequence is AGESAAPAAPAGGSEQQ.

Belongs to the polyribonucleotide nucleotidyltransferase family. Requires Mg(2+) as cofactor.

The protein localises to the cytoplasm. The catalysed reaction is RNA(n+1) + phosphate = RNA(n) + a ribonucleoside 5'-diphosphate. In terms of biological role, involved in mRNA degradation. Catalyzes the phosphorolysis of single-stranded polyribonucleotides processively in the 3'- to 5'-direction. This is Polyribonucleotide nucleotidyltransferase from Cupriavidus taiwanensis (strain DSM 17343 / BCRC 17206 / CCUG 44338 / CIP 107171 / LMG 19424 / R1) (Ralstonia taiwanensis (strain LMG 19424)).